An 86-amino-acid polypeptide reads, in one-letter code: Putative regulatory protein Dvul_2085 (86 aa).

Belongs to the RemA family.

This Nitratidesulfovibrio vulgaris (strain DP4) (Desulfovibrio vulgaris) protein is Putative regulatory protein Dvul_2085.